The primary structure comprises 327 residues: uncharacterized protein (327 aa).

The signal sequence occupies residues 1–24; sequence MAMACLCLANISWATVCANSTGVA.

Belongs to the fimbrial protein family.

Its subcellular location is the fimbrium. In terms of biological role, part of the sfmACDHF fimbrial operon. Could contribute to adhesion to various surfaces in specific environmental niches. Increases adhesion to eukaryotic T24 bladder epithelial cells in the absence of fim genes. This is an uncharacterized protein from Escherichia coli (strain K12).